An 874-amino-acid chain; its full sequence is Alanine--tRNA ligase (874 aa).

Zn(2+)-binding residues include His562, His566, Cys664, and His668.

This sequence belongs to the class-II aminoacyl-tRNA synthetase family. Zn(2+) serves as cofactor.

It localises to the cytoplasm. It carries out the reaction tRNA(Ala) + L-alanine + ATP = L-alanyl-tRNA(Ala) + AMP + diphosphate. In terms of biological role, catalyzes the attachment of alanine to tRNA(Ala) in a two-step reaction: alanine is first activated by ATP to form Ala-AMP and then transferred to the acceptor end of tRNA(Ala). Also edits incorrectly charged Ser-tRNA(Ala) and Gly-tRNA(Ala) via its editing domain. The sequence is that of Alanine--tRNA ligase from Shewanella sp. (strain ANA-3).